A 287-amino-acid polypeptide reads, in one-letter code: ATP synthase gamma chain (287 aa).

This sequence belongs to the ATPase gamma chain family. As to quaternary structure, F-type ATPases have 2 components, CF(1) - the catalytic core - and CF(0) - the membrane proton channel. CF(1) has five subunits: alpha(3), beta(3), gamma(1), delta(1), epsilon(1). CF(0) has three main subunits: a, b and c.

It localises to the cell inner membrane. In terms of biological role, produces ATP from ADP in the presence of a proton gradient across the membrane. The gamma chain is believed to be important in regulating ATPase activity and the flow of protons through the CF(0) complex. This is ATP synthase gamma chain from Enterobacter sp. (strain 638).